Consider the following 392-residue polypeptide: GTPase Obg (392 aa).

The 159-residue stretch at 1-159 (MKFIDEALIR…RDLQLELMLL (159 aa)) folds into the Obg domain. Positions 160-333 (ADVGMLGLPN…LCRDIMDFIE (174 aa)) constitute an OBG-type G domain. Residues 166–173 (GLPNAGKS), 191–195 (FTTLV), 213–216 (DIPG), 283–286 (NKID), and 314–316 (SAA) contribute to the GTP site. The Mg(2+) site is built by S173 and T193. The interval 361-392 (SEQVFTEDDQEEDDWDDWSEDDEEGVEIIYKP) is disordered. Positions 365–386 (FTEDDQEEDDWDDWSEDDEEGV) are enriched in acidic residues.

It belongs to the TRAFAC class OBG-HflX-like GTPase superfamily. OBG GTPase family. In terms of assembly, monomer. Mg(2+) serves as cofactor.

The protein localises to the cytoplasm. In terms of biological role, an essential GTPase which binds GTP, GDP and possibly (p)ppGpp with moderate affinity, with high nucleotide exchange rates and a fairly low GTP hydrolysis rate. Plays a role in control of the cell cycle, stress response, ribosome biogenesis and in those bacteria that undergo differentiation, in morphogenesis control. The chain is GTPase Obg from Histophilus somni (strain 2336) (Haemophilus somnus).